Consider the following 153-residue polypeptide: Aspartate carbamoyltransferase regulatory chain (153 aa).

4 residues coordinate Zn(2+): Cys109, Cys114, Cys138, and Cys141.

This sequence belongs to the PyrI family. Contains catalytic and regulatory chains. The cofactor is Zn(2+).

Involved in allosteric regulation of aspartate carbamoyltransferase. The sequence is that of Aspartate carbamoyltransferase regulatory chain from Vibrio parahaemolyticus serotype O3:K6 (strain RIMD 2210633).